The sequence spans 117 residues: Early E3 13.3 kDa protein (117 aa).

This chain is Early E3 13.3 kDa protein, found in Canine adenovirus serotype 1 (strain Glaxo) (CAdV-1).